Here is a 955-residue protein sequence, read N- to C-terminus: Thyroid hormone receptor-associated protein 3 (955 aa).

Positions Met-1 to Tyr-94 are disordered. An N-acetylserine modification is found at Ser-2. The tract at residues Ser-2 to Ser-190 is required for mRNA splicing activation. The span at Ser-14–Ser-51 shows a compositional bias: basic residues. The residue at position 17 (Arg-17) is a Dimethylated arginine. Residues His-58 to Gly-75 show a composition bias toward basic and acidic residues. Arg-66 carries the asymmetric dimethylarginine modification. Residues Arg-82–Tyr-94 are compositionally biased toward low complexity. 2 positions are modified to asymmetric dimethylarginine: Arg-101 and Arg-108. The tract at residues Ala-117–Ser-559 is disordered. Basic residues predominate over residues Arg-121–Ser-143. The span at Arg-144 to Arg-155 shows a compositional bias: basic and acidic residues. A compositionally biased stretch (low complexity) spans Ser-157–His-166. A compositionally biased stretch (basic and acidic residues) spans Ser-167–Arg-188. A Glycyl lysine isopeptide (Lys-Gly) (interchain with G-Cter in SUMO1); alternate cross-link involves residue Lys-202. Residue Lys-202 forms a Glycyl lysine isopeptide (Lys-Gly) (interchain with G-Cter in SUMO2); alternate linkage. The segment covering Gln-204–Ser-220 has biased composition (polar residues). A Glycyl lysine isopeptide (Lys-Gly) (interchain with G-Cter in SUMO2) cross-link involves residue Lys-215. Phosphoserine is present on Ser-220. Residue Lys-221 forms a Glycyl lysine isopeptide (Lys-Gly) (interchain with G-Cter in SUMO2); alternate linkage. Lys-221 is subject to N6-acetyllysine; alternate. 5 positions are modified to phosphoserine: Ser-232, Ser-237, Ser-240, Ser-243, and Ser-248. A Glycyl lysine isopeptide (Lys-Gly) (interchain with G-Cter in SUMO2); alternate cross-link involves residue Lys-252. Lys-252 is modified (N6-methyllysine; alternate). Ser-253 and Ser-257 each carry phosphoserine. A compositionally biased stretch (pro residues) spans Arg-266–Pro-276. Polar residues predominate over residues Gln-282–Gly-300. Positions Gly-305–Ser-331 are enriched in low complexity. 3 positions are modified to phosphoserine: Ser-315, Ser-320, and Ser-323. A Phosphothreonine modification is found at Thr-324. Ser-326 is subject to Phosphoserine. Tyr-328 is modified (phosphotyrosine). Residue Lys-333 forms a Glycyl lysine isopeptide (Lys-Gly) (interchain with G-Cter in SUMO2) linkage. Residue Ser-339 is modified to Phosphoserine. Lys-346 is covalently cross-linked (Glycyl lysine isopeptide (Lys-Gly) (interchain with G-Cter in SUMO2); alternate). An N6-acetyllysine; alternate modification is found at Lys-346. The span at Arg-347–Ser-377 shows a compositional bias: basic and acidic residues. Residues Lys-353 and Lys-375 each participate in a glycyl lysine isopeptide (Lys-Gly) (interchain with G-Cter in SUMO2) cross-link. The segment at Asp-359–Glu-955 is required for mRNA decay activity. Ser-377 and Ser-379 each carry phosphoserine. Residue Lys-387 forms a Glycyl lysine isopeptide (Lys-Gly) (interchain with G-Cter in SUMO1); alternate linkage. Lys-387 participates in a covalent cross-link: Glycyl lysine isopeptide (Lys-Gly) (interchain with G-Cter in SUMO2); alternate. Glycyl lysine isopeptide (Lys-Gly) (interchain with G-Cter in SUMO2) cross-links involve residues Lys-389 and Lys-396. Residue Thr-397 is modified to Phosphothreonine. Lys-401 is covalently cross-linked (Glycyl lysine isopeptide (Lys-Gly) (interchain with G-Cter in SUMO2)). Phosphoserine is present on residues Ser-406 and Ser-408. Residues Leu-414–Phe-452 show a composition bias toward basic and acidic residues. Residues Lys-421 and Lys-427 each participate in a glycyl lysine isopeptide (Lys-Gly) (interchain with G-Cter in SUMO2) cross-link. Residue Ser-444 is modified to Phosphoserine. Lys-451 participates in a covalent cross-link: Glycyl lysine isopeptide (Lys-Gly) (interchain with G-Cter in SUMO1); alternate. Residues Lys-451 and Lys-455 each participate in a glycyl lysine isopeptide (Lys-Gly) (interchain with G-Cter in SUMO2); alternate cross-link. An N6-acetyllysine; alternate modification is found at Lys-455. Glycyl lysine isopeptide (Lys-Gly) (interchain with G-Cter in SUMO2) cross-links involve residues Lys-461 and Lys-467. Ser-468 carries the phosphoserine modification. Glycyl lysine isopeptide (Lys-Gly) (interchain with G-Cter in SUMO2); alternate cross-links involve residues Lys-470 and Lys-481. 2 positions are modified to N6-acetyllysine; alternate: Lys-470 and Lys-481. Residue Lys-486 forms a Glycyl lysine isopeptide (Lys-Gly) (interchain with G-Cter in SUMO2) linkage. The segment covering Phe-495–Phe-521 has biased composition (basic and acidic residues). Lys-519 is subject to N6-acetyllysine. A Glycyl lysine isopeptide (Lys-Gly) (interchain with G-Cter in SUMO2); alternate cross-link involves residue Lys-527. The residue at position 527 (Lys-527) is an N6-acetyllysine; alternate. The residue at position 535 (Ser-535) is a Phosphoserine. The segment covering Lys-540–Ala-550 has biased composition (basic and acidic residues). Lys-551 participates in a covalent cross-link: Glycyl lysine isopeptide (Lys-Gly) (interchain with G-Cter in SUMO2). Position 552–559 (Gly-552–Ser-559) interacts with ATP. Lys-558 is covalently cross-linked (Glycyl lysine isopeptide (Lys-Gly) (interchain with G-Cter in SUMO2); alternate). Residue Lys-558 is modified to N6-acetyllysine; alternate. A phosphoserine mark is found at Ser-560, Ser-562, and Ser-575. A Glycyl lysine isopeptide (Lys-Gly) (interchain with G-Cter in SUMO2) cross-link involves residue Lys-602. Residues Ser-619, Ser-622, Ser-672, Ser-682, and Ser-684 each carry the phosphoserine modification. The span at Glu-663–Asp-680 shows a compositional bias: basic and acidic residues. A disordered region spans residues Glu-663 to Glu-955. The segment covering Leu-691–His-761 has biased composition (basic and acidic residues). Lys-697 is covalently cross-linked (Glycyl lysine isopeptide (Lys-Gly) (interchain with G-Cter in SUMO2)). At Ser-698 the chain carries Phosphoserine. Glycyl lysine isopeptide (Lys-Gly) (interchain with G-Cter in SUMO2) cross-links involve residues Lys-705, Lys-709, Lys-711, Lys-756, and Lys-759. Positions Lys-762–Asp-775 are enriched in basic residues. A compositionally biased stretch (low complexity) spans Ser-779–Ser-789. Lys-811 carries the N6-acetyllysine modification. Asymmetric dimethylarginine is present on Arg-845. Residues Tyr-848–Asp-859 are compositionally biased toward low complexity. Residue Thr-874 is modified to Phosphothreonine. Residues Lys-876 and Lys-879 each participate in a glycyl lysine isopeptide (Lys-Gly) (interchain with G-Cter in SUMO2) cross-link. Positions Tyr-881–Val-895 are enriched in basic and acidic residues. Phosphoserine is present on residues Ser-928 and Ser-939. Positions Glu-930 to Gly-940 are enriched in acidic residues.

It belongs to the BCLAF1/THRAP3 family. In terms of assembly, associated with the large multiprotein complex TRAP (Mediator complex-like). Interacts with SFPQ; the interaction is dependent on SFPQ phosphorylation at 'Thr-687' and inhibits binding of SFPQ to an ESS1 exonic splicing silencer element-containing RNA. Interacts with NXF1. Component of the SNARP complex which consists at least of SNIP1, SNW1, THRAP3, BCLAF1 and PNN. Associated with spliced mRNP complexes. Interacts with HELZ2 and PPARG. Interacts with CLOCK and BMAL1. Component of a MACOM-like complex, named WTAP complex, composed of WTAP, ZC3H13, CBLL1, KIAA1429, RBM15, BCLAF1 and THRAP3. ADP-ribosylation during genotoxic stress promotes accumulation in nuclear speckles. Ubiquitous.

The protein resides in the nucleus. It is found in the nucleoplasm. It localises to the nucleus speckle. Its function is as follows. Involved in pre-mRNA splicing. Remains associated with spliced mRNA after splicing which probably involves interactions with the exon junction complex (EJC). Can trigger mRNA decay which seems to be independent of nonsense-mediated decay involving premature stop codons (PTC) recognition. May be involved in nuclear mRNA decay. Involved in regulation of signal-induced alternative splicing. During splicing of PTPRC/CD45 is proposed to sequester phosphorylated SFPQ from PTPRC/CD45 pre-mRNA in resting T-cells. Involved in cyclin-D1/CCND1 mRNA stability probably by acting as component of the SNARP complex which associates with both the 3'end of the CCND1 gene and its mRNA. Involved in response to DNA damage. Is excluced from DNA damage sites in a manner that parallels transcription inhibition; the function may involve the SNARP complex. Initially thought to play a role in transcriptional coactivation through its association with the TRAP complex; however, it is not regarded as a stable Mediator complex subunit. Cooperatively with HELZ2, enhances the transcriptional activation mediated by PPARG, maybe through the stabilization of the PPARG binding to DNA in presence of ligand. May play a role in the terminal stage of adipocyte differentiation. Plays a role in the positive regulation of the circadian clock. Acts as a coactivator of the CLOCK-BMAL1 heterodimer and promotes its transcriptional activator activity and binding to circadian target genes. The chain is Thyroid hormone receptor-associated protein 3 from Homo sapiens (Human).